A 101-amino-acid polypeptide reads, in one-letter code: Large ribosomal subunit protein eL30 (101 aa).

It belongs to the eukaryotic ribosomal protein eL30 family.

This Pyrobaculum neutrophilum (strain DSM 2338 / JCM 9278 / NBRC 100436 / V24Sta) (Thermoproteus neutrophilus) protein is Large ribosomal subunit protein eL30.